The primary structure comprises 251 residues: NADPH-dependent oxidoreductase (251 aa).

It belongs to the flavin oxidoreductase frp family. FMN is required as a cofactor.

Reduces FMN, organic nitro compounds and disulfide DTNB. Involved in maintenance of the cellular redox state and the disulfide stress response. The chain is NADPH-dependent oxidoreductase (nfrA) from Staphylococcus aureus (strain bovine RF122 / ET3-1).